Reading from the N-terminus, the 1141-residue chain is cGMP-inhibited 3',5'-cyclic phosphodiesterase 3A (1141 aa).

Residues 1 to 42 (MAVRGEAAQDLAKPGLGGASPARVARGNHRHRGESSPSPRGS) form a disordered region. Residues 62–82 (SALCAGSLSVLLALLVRLVGG) traverse the membrane as a helical segment. The disordered stretch occupies residues 90 to 111 (KSQEAAAEEEEEEGARGGVFPG). The next 5 helical transmembrane spans lie at 127-147 (LQPAALLFSLLCAFFWMGLCL), 157-177 (AVALLAACCAGEALVQLSLGV), 182-202 (LLSLPAAGVLLSCLGGATWLV), 207-227 (LGVLMVAWTSVLRTVALVSLE), and 229-249 (FKVAWRPYLAYLAAVLGLLLA). Phosphoserine is present on S310. Residues 433–445 (RVSSTWTTTTSAT) are compositionally biased toward low complexity. The disordered stretch occupies residues 433-483 (RVSSTWTTTTSATGLPTLEPAPVRRDRSASIKPHEAPSPSAVNPDSWNAPG). The segment covering 454–467 (PVRRDRSASIKPHE) has biased composition (basic and acidic residues). The segment covering 472-483 (SAVNPDSWNAPG) has biased composition (polar residues). A phosphoserine mark is found at S492, S520, S524, and S533. Positions 505-654 (VKAKKQNRPG…CQREPQRKAS (150 aa)) are disordered. Residues 522-532 (VPSPSSSPPQG) are compositionally biased toward pro residues. A compositionally biased stretch (low complexity) spans 533 to 544 (SPASSPVSNSAS). Residues 618 to 637 (TSQVTSDYETNNNSDSSDIL) are compositionally biased toward polar residues. The tract at residues 669–1141 (KPILAPEPLV…EETLAPQPDL (473 aa)) is interaction with SLFN12. Residues 674-1093 (PEPLVMDNLD…MMWKKVIEEE (420 aa)) enclose the PDEase domain. The Proton donor role is filled by H752. H752 contacts AMP. 4 residues coordinate Mn(2+): H756, H836, D837, and D950. 3 residues coordinate AMP: D837, D950, and Q1001. D837 is a Mg(2+) binding site. Disordered regions lie at residues 1024-1060 (GKWVDDSDDSGDTDDPEEEEEEAETPHEDEACESSIA) and 1120-1141 (KEEEEEKGKPRAEETLAPQPDL). Residues 1029 to 1046 (DSDDSGDTDDPEEEEEEA) are compositionally biased toward acidic residues. Residue S1033 is modified to Phosphoserine. A Phosphothreonine modification is found at T1036. A Glycyl lysine isopeptide (Lys-Gly) (interchain with G-Cter in SUMO2) cross-link involves residue K1120.

This sequence belongs to the cyclic nucleotide phosphodiesterase family. PDE3 subfamily. It depends on Mn(2+) as a cofactor. Mg(2+) is required as a cofactor.

The protein resides in the membrane. It is found in the cytoplasm. It localises to the cytosol. The catalysed reaction is a nucleoside 3',5'-cyclic phosphate + H2O = a nucleoside 5'-phosphate + H(+). It carries out the reaction 3',5'-cyclic AMP + H2O = AMP + H(+). The enzyme catalyses 3',5'-cyclic GMP + H2O = GMP + H(+). It catalyses the reaction 3',5'-cyclic UMP + H2O = UMP + H(+). Inhibited by cGMP. Its function is as follows. Cyclic nucleotide phosphodiesterase with specificity for the second messengers cAMP and cGMP, which are key regulators of many important physiological processes. Also has activity toward cUMP. Independently of its catalytic activity it is part of an E2/17beta-estradiol-induced pro-apoptotic signaling pathway. E2 stabilizes the PDE3A/SLFN12 complex in the cytosol, promoting the dephosphorylation of SLFN12 and activating its pro-apoptotic ribosomal RNA/rRNA ribonuclease activity. This apoptotic pathway might be relevant in tissues with high concentration of E2 and be for instance involved in placenta remodeling. This is cGMP-inhibited 3',5'-cyclic phosphodiesterase 3A from Mus musculus (Mouse).